The following is a 345-amino-acid chain: GTPase Obg (345 aa).

In terms of domain architecture, Obg spans 1-159 (MRFIDEASIT…FHLKLELKLL (159 aa)). One can recognise an OBG-type G domain in the interval 160–329 (ADVGIVGLPN…LIQILARQIA (170 aa)). Residues 166–173 (GLPNAGKS), 191–195 (FTTLT), 213–216 (DIPG), 283–286 (NKID), and 310–312 (SAA) each bind GTP. Positions 173 and 193 each coordinate Mg(2+).

This sequence belongs to the TRAFAC class OBG-HflX-like GTPase superfamily. OBG GTPase family. Monomer. Mg(2+) serves as cofactor.

The protein localises to the cytoplasm. Its function is as follows. An essential GTPase which binds GTP, GDP and possibly (p)ppGpp with moderate affinity, with high nucleotide exchange rates and a fairly low GTP hydrolysis rate. Plays a role in control of the cell cycle, stress response, ribosome biogenesis and in those bacteria that undergo differentiation, in morphogenesis control. This is GTPase Obg from Desulforapulum autotrophicum (strain ATCC 43914 / DSM 3382 / VKM B-1955 / HRM2) (Desulfobacterium autotrophicum).